The sequence spans 115 residues: NAD(P)H-quinone oxidoreductase subunit M (115 aa).

Belongs to the complex I NdhM subunit family. NDH-1 can be composed of about 15 different subunits; different subcomplexes with different compositions have been identified which probably have different functions.

It localises to the cellular thylakoid membrane. The catalysed reaction is a plastoquinone + NADH + (n+1) H(+)(in) = a plastoquinol + NAD(+) + n H(+)(out). It catalyses the reaction a plastoquinone + NADPH + (n+1) H(+)(in) = a plastoquinol + NADP(+) + n H(+)(out). NDH-1 shuttles electrons from an unknown electron donor, via FMN and iron-sulfur (Fe-S) centers, to quinones in the respiratory and/or the photosynthetic chain. The immediate electron acceptor for the enzyme in this species is believed to be plastoquinone. Couples the redox reaction to proton translocation, and thus conserves the redox energy in a proton gradient. Cyanobacterial NDH-1 also plays a role in inorganic carbon-concentration. This is NAD(P)H-quinone oxidoreductase subunit M from Synechococcus sp. (strain CC9902).